The following is a 341-amino-acid chain: UDP-3-O-acylglucosamine N-acyltransferase (341 aa).

The active-site Proton acceptor is the His-241.

It belongs to the transferase hexapeptide repeat family. LpxD subfamily. As to quaternary structure, homotrimer.

The enzyme catalyses a UDP-3-O-[(3R)-3-hydroxyacyl]-alpha-D-glucosamine + a (3R)-hydroxyacyl-[ACP] = a UDP-2-N,3-O-bis[(3R)-3-hydroxyacyl]-alpha-D-glucosamine + holo-[ACP] + H(+). Its pathway is bacterial outer membrane biogenesis; LPS lipid A biosynthesis. Functionally, catalyzes the N-acylation of UDP-3-O-acylglucosamine using 3-hydroxyacyl-ACP as the acyl donor. Is involved in the biosynthesis of lipid A, a phosphorylated glycolipid that anchors the lipopolysaccharide to the outer membrane of the cell. In Mannheimia succiniciproducens (strain KCTC 0769BP / MBEL55E), this protein is UDP-3-O-acylglucosamine N-acyltransferase.